A 145-amino-acid polypeptide reads, in one-letter code: MAFSSGLWGPCVHMSRAFSQRCFSTTGSLGAIQKMTRVRVVDNSALGNTPYHRPPRCIHVYNKNGVGKVGDRILLAIKGQKKKALIVGHRMPGPTMTPRFDSNNVVLIEDNGNPVGTRIKTPIPTSLRQREGEFSKVLAIAQNFV.

The transit peptide at 1 to 30 (MAFSSGLWGPCVHMSRAFSQRCFSTTGSLG) directs the protein to the mitochondrion.

This sequence belongs to the universal ribosomal protein uL14 family. Component of the mitochondrial ribosome large subunit (39S) which comprises a 16S rRNA and about 50 distinct proteins. Interacts with MALSU1.

It is found in the mitochondrion. Functionally, may form part of 2 intersubunit bridges in the assembled ribosome. Upon binding to MALSU1, intersubunit bridge formation is blocked, preventing ribosome formation and repressing translation. The chain is Large ribosomal subunit protein uL14m (MRPL14) from Bos taurus (Bovine).